The following is a 349-amino-acid chain: D-alanine--D-alanine ligase (349 aa).

Residues 132-335 (KHVFEAVGVP…YSDLIEKLVD (204 aa)) form the ATP-grasp domain. 162–217 (VEKLEFPVFVKPANMGSSVGISKVDDLADLQPALSEAYKYDNRVVIEQGVDAREIE) contacts ATP. Mg(2+) contacts are provided by Asp-289, Glu-302, and Asn-304.

This sequence belongs to the D-alanine--D-alanine ligase family. It depends on Mg(2+) as a cofactor. The cofactor is Mn(2+).

It is found in the cytoplasm. The catalysed reaction is 2 D-alanine + ATP = D-alanyl-D-alanine + ADP + phosphate + H(+). It functions in the pathway cell wall biogenesis; peptidoglycan biosynthesis. In terms of biological role, cell wall formation. The sequence is that of D-alanine--D-alanine ligase from Lactococcus lactis subsp. cremoris (strain SK11).